Here is a 687-residue protein sequence, read N- to C-terminus: Glycine--tRNA ligase beta subunit (687 aa).

Belongs to the class-II aminoacyl-tRNA synthetase family. In terms of assembly, tetramer of two alpha and two beta subunits.

The protein resides in the cytoplasm. The catalysed reaction is tRNA(Gly) + glycine + ATP = glycyl-tRNA(Gly) + AMP + diphosphate. This Citrifermentans bemidjiense (strain ATCC BAA-1014 / DSM 16622 / JCM 12645 / Bem) (Geobacter bemidjiensis) protein is Glycine--tRNA ligase beta subunit.